Reading from the N-terminus, the 230-residue chain is UPF0173 metal-dependent hydrolase Pden_0574 (230 aa).

This sequence belongs to the UPF0173 family.

This is UPF0173 metal-dependent hydrolase Pden_0574 from Paracoccus denitrificans (strain Pd 1222).